Consider the following 296-residue polypeptide: MRLLIGFALALALIGCAQKGAESIGSQKENDLNLEDSSKKSHQNAKQDLPAVTEDSVSLFNGNKIFVSKEKNSSGKYDLRATIDQVELKGTSDKNNGSGTLEGSKPDKSKVKLTVSADLNTVTLEAFDASNQKISSKVTKKQGSITEETLKANKLDSKKLTRSNGTTLEYSQITDADNATKAVETLKNSIKLEGSLVGGKTTVEIKEGTVTLKREIEKDGKVKVFLNDTAGSNKKTGKWEDSTSTLTISADSKKTKDLVFLTDGTITVQQYNTAGTSLEGSASEIKNLSELKNALK.

Residues 1 to 15 form the signal peptide; that stretch reads MRLLIGFALALALIG. C16 is lipidated: N-palmitoyl cysteine. A lipid anchor (S-diacylglycerol cysteine) is attached at C16. The disordered stretch occupies residues 25–51; that stretch reads GSQKENDLNLEDSSKKSHQNAKQDLPA. The segment covering 28–39 has biased composition (basic and acidic residues); it reads KENDLNLEDSSK.

It is found in the cell outer membrane. The sequence is that of Outer surface protein B (ospB) from Borreliella burgdorferi (strain ATCC 35210 / DSM 4680 / CIP 102532 / B31) (Borrelia burgdorferi).